A 138-amino-acid polypeptide reads, in one-letter code: Large ribosomal subunit protein uL16 (138 aa).

The segment covering Met-1–Ile-18 has biased composition (basic residues). The disordered stretch occupies residues Met-1–Asn-21.

It belongs to the universal ribosomal protein uL16 family. In terms of assembly, part of the 50S ribosomal subunit.

Its function is as follows. Binds 23S rRNA and is also seen to make contacts with the A and possibly P site tRNAs. The polypeptide is Large ribosomal subunit protein uL16 (Rhodopirellula baltica (strain DSM 10527 / NCIMB 13988 / SH1)).